A 477-amino-acid chain; its full sequence is MSTPQLMQGMQKDLTCPLCLELFRAPVTPECGHTFCQGCLTGAPKNQDQNGSTPCPTCQTPSRPETLQINRQLEHLVQSFKQVPKGHCLEHLDPLSVYCEQDKELICGVCASLGKHKGHNIITAAEAYAKLKRQLPQQQVILQEARLKKEKTVAVLDRQVAEVQDTVSRFKGNVKHQLNAMRSYLSIMEASLSKEADNAEHTATEALLVERKTMGHYLDQLRQMDGVLKDVESQEQTEFLRKYCVVAARLNKILAESPPPGRLDIQLPIISDEFKFQVWRKMFRALMPALENLTFDPDTAQQNLVVFSDGKSVECSEQKQSVSDEPNRFDKSNCLVSKESFTEGEHYWEVLVEDKPRWALGVISETANRKGKLHASPSNGFWLIGCKEGKVYEAHTEQKEPRVLRVEGRPEKIGIYLSFSDGVVSFFDSSDEDNIKLLYTFNERFSGRLHPFFDVCWHDKGKNAQPLKIFYPPAEQL.

Zn(2+)-binding residues include L14, P17, P29, C31, T34, Q37, T53, P56, G86, L89, V97, E100, L105, G108, G114, and K117. Residues C16–Q59 form an RING-type zinc finger. The B box-type zinc-finger motif lies at V83 to A124. A coiled-coil region spans residues L135–E232. A B30.2/SPRY domain is found at D272–Q476.

This sequence belongs to the TRIM/RBCC family. Homodimer. Homooligomer; disulfide-linked. Oligomerizes on the phospholipid membrane. Post-translationally, disulfide bond formation at Cys-244 occurs in case of membrane damage that cause the entry of the oxidized milieu of the extracellular space, resulting in homooligomerization.

The protein localises to the cell membrane. Its subcellular location is the sarcolemma. The protein resides in the cytoplasmic vesicle membrane. The catalysed reaction is S-ubiquitinyl-[E2 ubiquitin-conjugating enzyme]-L-cysteine + [acceptor protein]-L-lysine = [E2 ubiquitin-conjugating enzyme]-L-cysteine + N(6)-ubiquitinyl-[acceptor protein]-L-lysine.. It functions in the pathway protein modification; protein ubiquitination. Its activity is regulated as follows. Specifically binds phosphatidylserine. The binding to phospholipids enhances ubiquitination activity. Muscle-specific E3 ubiquitin-protein ligase that plays a central role in cell membrane repair by nucleating the assembly of the repair machinery at injury sites. Acts as a sensor of oxidation: upon membrane damage, entry of extracellular oxidative environment results in disulfide bond formation and homooligomerization at the injury site. This oligomerization acts as a nucleation site for recruitment of TRIM72-containing vesicles to the injury site, leading to membrane patch formation. Probably acts upstream of the Ca(2+)-dependent membrane resealing process. Required for transport of DYSF to sites of cell injury during repair patch formation. Regulates membrane budding and exocytosis. May be involved in the regulation of the mobility of KCNB1-containing endocytic vesicles. The chain is Tripartite motif-containing protein 72 (trim72) from Xenopus tropicalis (Western clawed frog).